Reading from the N-terminus, the 52-residue chain is Eukaryotic translation initiation factor 2 subunit 1 (52 aa).

Residues 16–52 (EDVVMVNVRSIAEMGAYVSLLEYNNIEGRILLSELSR) enclose the S1 motif domain. Residue Ser-48 is modified to Phosphoserine; by HRI. Ser-51 carries the phosphoserine modification.

Belongs to the eIF-2-alpha family. Eukaryotic translation initiation factor 2 eIF2 is a heterotrimeric complex composed of an alpha (EIF2S1), a beta (EIF2S2) and a gamma (EIF2S3) chain. eIF2 is member of the 43S pre-initiation complex (43S PIC). eIF2 forms a complex with at least CELF1/CUGBP1, CALR, CALR3, EIF2S1, EIF2S2, HSP90B1 and HSPA5. Interaction with METAP2 protects EIF2S1 from inhibitory phosphorylation. Interacts with ABCF1. Associates with ribosomes. Interacts with DDX3X in an RNA-independent manner. Post-translationally, phosphorylation at Ser-48 and Ser-51 stabilizes the eIF-2/GDP/eIF2B complex and prevents GDP/GTP exchange reaction, thus impairing the recycling of eIF-2 between successive rounds of initiation and leading to global inhibition of translation, while concomitantly initiating the preferential translation of integrated stress response (ISR)-specific mRNAs. Substrate for at least 4 kinases: EIF2AK1/HRI, EIF2AK2/PKR, EIF2AK3/PERK and EIF2AK4/GCN2. Phosphorylation on Ser-51 by the EIF2AK4/GCN2 protein kinase occurs in response to amino acid starvation and UV irradiation. Phosphorylation at Ser-51 by the EIF2AK3/PERK protein kinase occurs in response to the unfolded protein response. Phosphorylation at Ser-51 by EIF2AK1/HRI in response to mitochondrial damage promotes relocalization to the mitochondrial surface.

The protein resides in the cytoplasm. The protein localises to the stress granule. Its subcellular location is the cytosol. It localises to the mitochondrion. Its activity is regulated as follows. Activity is regulated by phosphorylation at Ser-49 and Ser-52, which stabilizes the eIF2/GDP/eIF2B complex and prevents the eIF2B-mediated exchange of GDP for GTP, thereby preventing the formation of the 43S pre-initiation complex (43S PIC). This results in the global attenuation of 5' cap-dependent protein synthesis and concomitant translation of ISR-specific mRNAs that contain a short upstream open reading frame (uORF) in their 5' UTR, such as ATF4, ATF5, DDIT3/CHOP and PPP1R15A/GADD34. Functionally, member of the eIF2 complex that functions in the early steps of protein synthesis by forming a ternary complex with GTP and initiator tRNA. This complex binds to a 40S ribosomal subunit, followed by mRNA binding to form a 43S pre-initiation complex. Junction of the 60S ribosomal subunit to form the 80S initiation complex is preceded by hydrolysis of the GTP bound to eIF2 and release of an eIF2-GDP binary complex. In order for eIF2 to recycle and catalyze another round of initiation, the GDP bound to eIF2 must exchange with GTP by way of a reaction catalyzed by eIF2B. EIF2S1/eIF2-alpha is a key component of the integrated stress response (ISR), required for adaptation to various stress: phosphorylation by metabolic-stress sensing protein kinases (EIF2AK1/HRI, EIF2AK2/PKR, EIF2AK3/PERK and EIF2AK4/GCN2) in response to stress converts EIF2S1/eIF2-alpha in a global protein synthesis inhibitor, leading to a attenuation of cap-dependent translation, while concomitantly initiating the preferential translation of ISR-specific mRNAs, such as the transcriptional activators ATF4 and QRICH1, and hence allowing ATF4- and QRICH1-mediated reprogramming. EIF2S1/eIF2-alpha also acts as an activator of mitophagy in response to mitochondrial damage: phosphorylation by EIF2AK1/HRI promotes relocalization to the mitochondrial surface, thereby triggering PRKN-independent mitophagy. This chain is Eukaryotic translation initiation factor 2 subunit 1 (EIF2S1), found in Oryctolagus cuniculus (Rabbit).